Reading from the N-terminus, the 509-residue chain is Lanosterol 14-alpha demethylase (509 aa).

A helical transmembrane segment spans residues 30–50 (GNLLSMLLIACAFTLSLVYLI). Residue cysteine 455 participates in heme binding.

The protein belongs to the cytochrome P450 family. Heme is required as a cofactor. Post-translationally, ubiquitinated by MARCHF6, leading to proteasomal degradation. As to expression, ubiquitously expressed with highest levels in testis, ovary, adrenal, prostate, liver, kidney and lung.

It is found in the endoplasmic reticulum membrane. It localises to the microsome membrane. It carries out the reaction a 14alpha-methyl steroid + 3 reduced [NADPH--hemoprotein reductase] + 3 O2 = a Delta(14) steroid + formate + 3 oxidized [NADPH--hemoprotein reductase] + 4 H2O + 4 H(+). The catalysed reaction is lanosterol + 3 reduced [NADPH--hemoprotein reductase] + 3 O2 = 4,4-dimethyl-5alpha-cholesta-8,14,24-trien-3beta-ol + formate + 3 oxidized [NADPH--hemoprotein reductase] + 4 H2O + 4 H(+). The enzyme catalyses 24,25-dihydrolanosterol + 3 reduced [NADPH--hemoprotein reductase] + 3 O2 = 4,4-dimethyl-8,14-cholestadien-3beta-ol + formate + 3 oxidized [NADPH--hemoprotein reductase] + 4 H2O + 4 H(+). It catalyses the reaction a 14alpha-methyl steroid + reduced [NADPH--hemoprotein reductase] + O2 = a 14alpha-hydroxymethyl steroid + oxidized [NADPH--hemoprotein reductase] + H2O + H(+). It carries out the reaction a 14alpha-hydroxymethyl steroid + reduced [NADPH--hemoprotein reductase] + O2 = a 14alpha-formyl steroid + oxidized [NADPH--hemoprotein reductase] + 2 H2O + H(+). The catalysed reaction is a 14alpha-formyl steroid + reduced [NADPH--hemoprotein reductase] + O2 = a Delta(14) steroid + formate + oxidized [NADPH--hemoprotein reductase] + H2O + 2 H(+). The enzyme catalyses lanosterol + reduced [NADPH--hemoprotein reductase] + O2 = 32-hydroxylanosterol + oxidized [NADPH--hemoprotein reductase] + H2O + H(+). It catalyses the reaction 32-hydroxylanosterol + reduced [NADPH--hemoprotein reductase] + O2 = 32-oxolanosterol + oxidized [NADPH--hemoprotein reductase] + 2 H2O + H(+). It carries out the reaction 32-oxolanosterol + reduced [NADPH--hemoprotein reductase] + O2 = 4,4-dimethyl-5alpha-cholesta-8,14,24-trien-3beta-ol + formate + oxidized [NADPH--hemoprotein reductase] + H2O + 2 H(+). The catalysed reaction is 24,25-dihydrolanosterol + reduced [NADPH--hemoprotein reductase] + O2 = 32-hydroxy-24,25-dihydrolanosterol + oxidized [NADPH--hemoprotein reductase] + H2O + H(+). The enzyme catalyses 32-hydroxy-24,25-dihydrolanosterol + reduced [NADPH--hemoprotein reductase] + O2 = 32-oxo-24,25-dihydrolanosterol + oxidized [NADPH--hemoprotein reductase] + 2 H2O + H(+). It catalyses the reaction 32-oxo-24,25-dihydrolanosterol + reduced [NADPH--hemoprotein reductase] + O2 = 4,4-dimethyl-8,14-cholestadien-3beta-ol + formate + oxidized [NADPH--hemoprotein reductase] + H2O + 2 H(+). Its pathway is steroid biosynthesis; zymosterol biosynthesis; zymosterol from lanosterol: step 1/6. Inhibited by azalanstat. Inhibited by azole antifungal agents ketoconazole, itraconazole and fluconazole. Functionally, sterol 14alpha-demethylase that plays a critical role in the cholesterol biosynthesis pathway, being cholesterol the major sterol component in mammalian membranes as well as a precursor for bile acid and steroid hormone synthesis. Cytochrome P450 monooxygenase that catalyzes the three-step oxidative removal of the 14alpha-methyl group (C-32) of sterols such as lanosterol (lanosta-8,24-dien-3beta-ol) and 24,25-dihydrolanosterol (DHL) in the form of formate, and converts the sterols to 4,4-dimethyl-5alpha-cholesta-8,14,24-trien-3beta-ol and 4,4-dimethyl-8,14-cholestadien-3beta-ol, respectively, which are intermediates of cholesterol biosynthesis. Can also demethylate substrates not intrinsic to mammals, such as eburicol (24-methylene-24,25-dihydrolanosterol), but at a lower rate than DHL. The protein is Lanosterol 14-alpha demethylase of Homo sapiens (Human).